Here is a 135-residue protein sequence, read N- to C-terminus: Lymphocyte antigen 6 complex locus protein G6d (135 aa).

A signal peptide spans 1–19 (MNSQLVGILLSALLGVALG). The UPAR/Ly6 domain occupies 22–121 (TRCYDCGGGP…ASSVTPLCIL (100 aa)). 5 disulfides stabilise this stretch: Cys24–Cys48, Cys27–Cys35, Cys42–Cys76, Cys82–Cys101, and Cys102–Cys107. O-linked (GalNAc...) threonine glycosylation occurs at Thr68. The GPI-anchor amidated asparagine moiety is linked to residue Asn108. A propeptide spans 109–135 (SAVASSVTPLCILAAAVTTLAWLLPGL) (removed in mature form).

In terms of assembly, homodimer. O-glycosylated. As to expression, expressed in embryonic tissue and adult lung, kidney, brain, liver and spleen.

It localises to the cell membrane. It is found in the cell projection. Its subcellular location is the filopodium. This Mus musculus (Mouse) protein is Lymphocyte antigen 6 complex locus protein G6d (Ly6g6d).